Consider the following 601-residue polypeptide: Glutathione-regulated potassium-efflux system protein KefB (601 aa).

A run of 13 helical transmembrane segments spans residues Asp5–Ala25, Ile29–Phe49, Glu55–Leu75, Ile87–Met107, Ala115–Met135, Val152–Gly172, His177–Gly197, Phe207–Gly227, Leu230–Leu250, Ile261–Ala281, Leu284–Val304, Phe326–Ser346, and Ala356–Ile376. The RCK N-terminal domain maps to Lys400–Glu518.

Belongs to the monovalent cation:proton antiporter 2 (CPA2) transporter (TC 2.A.37) family. KefB subfamily. As to quaternary structure, interacts with the regulatory subunit KefG.

It localises to the cell inner membrane. Its function is as follows. Pore-forming subunit of a potassium efflux system that confers protection against electrophiles. Catalyzes K(+)/H(+) antiport. This Enterobacter sp. (strain 638) protein is Glutathione-regulated potassium-efflux system protein KefB.